A 261-amino-acid chain; its full sequence is tRNA U34 carboxymethyltransferase (261 aa).

Residues lysine 25, tryptophan 39, lysine 44, glycine 63, 114–115, tyrosine 135, and arginine 250 contribute to the carboxy-S-adenosyl-L-methionine site; that span reads VE.

Belongs to the class I-like SAM-binding methyltransferase superfamily. CmoB family. Homotetramer.

It carries out the reaction carboxy-S-adenosyl-L-methionine + 5-hydroxyuridine(34) in tRNA = 5-carboxymethoxyuridine(34) in tRNA + S-adenosyl-L-homocysteine + H(+). In terms of biological role, catalyzes carboxymethyl transfer from carboxy-S-adenosyl-L-methionine (Cx-SAM) to 5-hydroxyuridine (ho5U) to form 5-carboxymethoxyuridine (cmo5U) at position 34 in tRNAs. The chain is tRNA U34 carboxymethyltransferase from Helicobacter pylori (strain HPAG1).